Reading from the N-terminus, the 611-residue chain is Mitochondrial distribution and morphology protein 34 (611 aa).

In terms of domain architecture, SMP-LTD spans 1 to 195 (MAFNFNWSPL…LPAIIHRLSL (195 aa)). The segment covering 325–342 (SAPLSSQDTASVASSQSR) has biased composition (polar residues). 4 disordered regions span residues 325-347 (SAPL…GLPS), 361-402 (RHSK…STIT), 415-544 (SIIP…PTYT), and 587-611 (SYVG…AYRH). A compositionally biased stretch (basic residues) spans 361–373 (RHSKAHARKRKKR). Basic and acidic residues-rich tracts occupy residues 374 to 385 (VIDLRPHRKPTD) and 444 to 459 (TLRD…ERTN). Positions 520–529 (PLGPPAPAPI) are enriched in pro residues.

This sequence belongs to the MDM34 family. As to quaternary structure, component of the ER-mitochondria encounter structure (ERMES) or MDM complex, composed of MMM1, MDM10, MDM12 and MDM34.

It localises to the mitochondrion outer membrane. Its function is as follows. Component of the ERMES/MDM complex, which serves as a molecular tether to connect the endoplasmic reticulum (ER) and mitochondria. Components of this complex are involved in the control of mitochondrial shape and protein biogenesis, and function in nonvesicular lipid trafficking between the ER and mitochondria. MDM34 is required for the interaction of the ER-resident membrane protein MMM1 and the outer mitochondrial membrane-resident beta-barrel protein MDM10. The protein is Mitochondrial distribution and morphology protein 34 of Paracoccidioides brasiliensis (strain Pb18).